A 98-amino-acid polypeptide reads, in one-letter code: MPPIFANIILAFATAFLGTLIFRSHLMSSLLCLEGMMLSMFILSTLIILNMHLTVSFMMPILLLVFAACEAAIGLALLVMVSNTYGLDYIKNLNLLQC.

Helical transmembrane passes span 2–22 (PPIF…TLIF), 29–49 (SLLC…LIIL), and 61–81 (ILLL…LVMV).

It belongs to the complex I subunit 4L family. As to quaternary structure, core subunit of respiratory chain NADH dehydrogenase (Complex I) which is composed of 45 different subunits.

Its subcellular location is the mitochondrion inner membrane. The enzyme catalyses a ubiquinone + NADH + 5 H(+)(in) = a ubiquinol + NAD(+) + 4 H(+)(out). Functionally, core subunit of the mitochondrial membrane respiratory chain NADH dehydrogenase (Complex I) which catalyzes electron transfer from NADH through the respiratory chain, using ubiquinone as an electron acceptor. Part of the enzyme membrane arm which is embedded in the lipid bilayer and involved in proton translocation. This is NADH-ubiquinone oxidoreductase chain 4L (MT-ND4L) from Avahi unicolor (Sambirano woolly lemur).